The following is a 238-amino-acid chain: Probable transcriptional regulatory protein SUB0364 (238 aa).

It belongs to the TACO1 family. YeeN subfamily.

Its subcellular location is the cytoplasm. This chain is Probable transcriptional regulatory protein SUB0364, found in Streptococcus uberis (strain ATCC BAA-854 / 0140J).